The sequence spans 201 residues: Acyl-homoserine-lactone synthase (201 aa).

The protein belongs to the autoinducer synthase family.

It carries out the reaction a fatty acyl-[ACP] + S-adenosyl-L-methionine = an N-acyl-L-homoserine lactone + S-methyl-5'-thioadenosine + holo-[ACP] + H(+). Required for the synthesis of BHL (N-butanoyl-L-homoserine lactone), and HHL (N-hexanoyl-L-homoserine lactone) autoinducer molecules which bind to RhlR and thus acts in elastase biosynthesis regulation. This Pseudomonas aeruginosa (strain ATCC 15692 / DSM 22644 / CIP 104116 / JCM 14847 / LMG 12228 / 1C / PRS 101 / PAO1) protein is Acyl-homoserine-lactone synthase (rhlI).